Here is a 367-residue protein sequence, read N- to C-terminus: Alanine racemase (367 aa).

Catalysis depends on Lys-40, which acts as the Proton acceptor; specific for D-alanine. Lys-40 bears the N6-(pyridoxal phosphate)lysine mark. Arg-136 contributes to the substrate binding site. Tyr-263 (proton acceptor; specific for L-alanine) is an active-site residue. Position 310 (Met-310) interacts with substrate.

The protein belongs to the alanine racemase family. The cofactor is pyridoxal 5'-phosphate.

The enzyme catalyses L-alanine = D-alanine. The protein operates within amino-acid biosynthesis; D-alanine biosynthesis; D-alanine from L-alanine: step 1/1. In terms of biological role, catalyzes the interconversion of L-alanine and D-alanine. May also act on other amino acids. This Streptococcus suis (strain 98HAH33) protein is Alanine racemase (alr).